Here is a 601-residue protein sequence, read N- to C-terminus: Elongation factor 4 (601 aa).

One can recognise a tr-type G domain in the interval 7–189 (KNIRNFSIVA…AIVTRLPPPQ (183 aa)). GTP contacts are provided by residues 19–24 (DHGKST) and 136–139 (NKID).

It belongs to the TRAFAC class translation factor GTPase superfamily. Classic translation factor GTPase family. LepA subfamily.

Its subcellular location is the cell inner membrane. It catalyses the reaction GTP + H2O = GDP + phosphate + H(+). Required for accurate and efficient protein synthesis under certain stress conditions. May act as a fidelity factor of the translation reaction, by catalyzing a one-codon backward translocation of tRNAs on improperly translocated ribosomes. Back-translocation proceeds from a post-translocation (POST) complex to a pre-translocation (PRE) complex, thus giving elongation factor G a second chance to translocate the tRNAs correctly. Binds to ribosomes in a GTP-dependent manner. The chain is Elongation factor 4 from Methylocella silvestris (strain DSM 15510 / CIP 108128 / LMG 27833 / NCIMB 13906 / BL2).